The primary structure comprises 292 residues: Pyruvate formate-lyase 2-activating enzyme (292 aa).

The 255-residue stretch at 33 to 287 (NDGEGIRTVV…REMAERAGLQ (255 aa)) folds into the Radical SAM core domain. [4Fe-4S] cluster contacts are provided by cysteine 47, cysteine 51, and cysteine 54. 53–55 (WCA) provides a ligand contact to S-adenosyl-L-methionine. One can recognise a 4Fe-4S ferredoxin-type domain in the interval 62–96 (GKIQTVRREAKCLHCAKCLRDADECPSGAFERIGR). S-adenosyl-L-methionine-binding positions include glycine 126, 175 to 177 (DLK), and histidine 247.

Belongs to the organic radical-activating enzymes family. The cofactor is [4Fe-4S] cluster.

The protein localises to the cytoplasm. The catalysed reaction is glycyl-[formate C-acetyltransferase] + reduced [flavodoxin] + S-adenosyl-L-methionine = glycin-2-yl radical-[formate C-acetyltransferase] + semiquinone [flavodoxin] + 5'-deoxyadenosine + L-methionine + H(+). Its function is as follows. Activation of pyruvate formate-lyase 2 under anaerobic conditions by generation of an organic free radical, using S-adenosylmethionine and reduced flavodoxin as cosubstrates to produce 5'-deoxy-adenosine. The chain is Pyruvate formate-lyase 2-activating enzyme (pflC) from Escherichia coli (strain K12).